Here is a 691-residue protein sequence, read N- to C-terminus: Choline transporter-like 1 (691 aa).

Basic and acidic residues predominate over residues 1–10 (MGCAESKDGE). The disordered stretch occupies residues 1-20 (MGCAESKDGEGEAQNNRPKY). The next 3 helical transmembrane spans lie at 28-48 (WLAI…FSFV), 205-225 (WHII…LVTM), and 232-252 (IVSW…TVAL). A glycan (N-linked (GlcNAc...) asparagine) is linked at Asn-261. 2 consecutive transmembrane segments (helical) span residues 282–302 (VLTL…VIYF) and 332–352 (LLAF…IICL). N-linked (GlcNAc...) asparagine glycosylation occurs at Asn-385. Transmembrane regions (helical) follow at residues 408 to 428 (SMFW…FACQ), 527 to 547 (VVAI…NAMA), 562 to 582 (FILF…GIVL), and 591 to 611 (FYMA…HIIL).

It belongs to the CTL (choline transporter-like) family.

The protein resides in the membrane. The sequence is that of Choline transporter-like 1 from Drosophila melanogaster (Fruit fly).